A 248-amino-acid polypeptide reads, in one-letter code: ATP synthase subunit a (248 aa).

6 consecutive transmembrane segments (helical) span residues 34–54, 91–111, 121–141, 147–167, 197–217, and 220–240; these read TNVTLWMALAVAAIALLLVAG, YFPYIFTLFMFILVANFLGLI, IAVTAVLALAVFITVTVIGFV, FLSLFWVASAPLALRPILAVI, FAGFAQVAAVAPIAIIGVMAI, and LEVLVSAIQAYVFTILTCVYL.

It belongs to the ATPase A chain family. F-type ATPases have 2 components, CF(1) - the catalytic core - and CF(0) - the membrane proton channel. CF(1) has five subunits: alpha(3), beta(3), gamma(1), delta(1), epsilon(1). CF(0) has four main subunits: a, b, b' and c.

The protein localises to the cell inner membrane. Its function is as follows. Key component of the proton channel; it plays a direct role in the translocation of protons across the membrane. This chain is ATP synthase subunit a, found in Dinoroseobacter shibae (strain DSM 16493 / NCIMB 14021 / DFL 12).